Here is a 618-residue protein sequence, read N- to C-terminus: MPQYRSHTSTHGRNMAGARSLWRATGMKDGDFGKPIIAVVNSFTQFVPGHVHLKDMGQLVAREIEAAGGVAKEFNTIAIDDGIAMGHSGMLYSLPSRDLIADSVEYMVNAHCADAMVCISNCDKITPGMLMAAMRLNIPVIFVSGGPMEAGKVKIQGQVIHLDLIDAMVKAADHSVSQAELDDVERSACPTCGSCSGMFTANSMNCLTEAFGLSLPGNGTVVATHADRKQLFLRAGRQIVELCKRYYEQDDASVLPRAIATKAAFENAMTLDVAMGGSTNTVLHILATAQEAGVDFTMADIDRISRSVPCLCKVAPMTDKYHIEDVHRAGGIMGILGELDRAGLINRDVPNVYAKNLGEAIDRWDVVRQHDVKVHEFFKAAPGGVPTQVAFSQDRRFNELDIDRTHGCIRNKANAYSQEGGLAVLYGNIALDGCIVKTAGVDESIWKFTGKARVFESQDAAVEAILGEKIVAGDVVVIRYEGPKGGPGMQEMLYPTSYLKSMGLGKECALLTDGRFSGGTSGLSIGHASPEAADGGAIGLVEEGDTIEIDIPNRRIHLAVTDGELAQRRAAMEAKGEAAWQPVSRERVISPALQAYALMATSADKGAVRDVKQIQRRK.

Aspartate 81 contacts Mg(2+). Cysteine 122 is a binding site for [2Fe-2S] cluster. Mg(2+) is bound by residues aspartate 123 and lysine 124. At lysine 124 the chain carries N6-carboxylysine. [2Fe-2S] cluster is bound at residue cysteine 195. Glutamate 491 contributes to the Mg(2+) binding site. Serine 517 (proton acceptor) is an active-site residue.

This sequence belongs to the IlvD/Edd family. As to quaternary structure, homodimer. Requires [2Fe-2S] cluster as cofactor. It depends on Mg(2+) as a cofactor.

It carries out the reaction (2R)-2,3-dihydroxy-3-methylbutanoate = 3-methyl-2-oxobutanoate + H2O. The catalysed reaction is (2R,3R)-2,3-dihydroxy-3-methylpentanoate = (S)-3-methyl-2-oxopentanoate + H2O. It participates in amino-acid biosynthesis; L-isoleucine biosynthesis; L-isoleucine from 2-oxobutanoate: step 3/4. The protein operates within amino-acid biosynthesis; L-valine biosynthesis; L-valine from pyruvate: step 3/4. Functions in the biosynthesis of branched-chain amino acids. Catalyzes the dehydration of (2R,3R)-2,3-dihydroxy-3-methylpentanoate (2,3-dihydroxy-3-methylvalerate) into 2-oxo-3-methylpentanoate (2-oxo-3-methylvalerate) and of (2R)-2,3-dihydroxy-3-methylbutanoate (2,3-dihydroxyisovalerate) into 2-oxo-3-methylbutanoate (2-oxoisovalerate), the penultimate precursor to L-isoleucine and L-valine, respectively. The protein is Dihydroxy-acid dehydratase of Dechloromonas aromatica (strain RCB).